The chain runs to 342 residues: UDP-glucuronic acid decarboxylase 3 (342 aa).

Over residues 1–11 (MAATSEKQNTT) the composition is skewed to polar residues. The tract at residues 1–22 (MAATSEKQNTTKPPPSPSPLRN) is disordered. 61-86 (DNYFTGSKENLKKWIGHPRFELIRHD) serves as a coordination point for NAD(+). Arg170 is a binding site for substrate. The active-site Proton acceptor is Tyr173. 173-177 (YDEGK) contributes to the NAD(+) binding site. A substrate-binding site is contributed by Asn202. Arg214 serves as a coordination point for NAD(+). Residues 215–219 (VVSNF), 232–239 (QKPGTQTR), and 299–303 (DPRQR) contribute to the substrate site.

This sequence belongs to the NAD(P)-dependent epimerase/dehydratase family. UDP-glucuronic acid decarboxylase subfamily. It depends on NAD(+) as a cofactor. As to expression, ubiquitous.

It is found in the cytoplasm. It carries out the reaction UDP-alpha-D-glucuronate + H(+) = UDP-alpha-D-xylose + CO2. Its pathway is nucleotide-sugar biosynthesis; UDP-alpha-D-xylose biosynthesis; UDP-alpha-D-xylose from UDP-alpha-D-glucuronate: step 1/1. In terms of biological role, catalyzes the NAD-dependent decarboxylation of UDP-glucuronic acid to UDP-xylose. Necessary for the biosynthesis of the core tetrasaccharide in glycosaminoglycan biosynthesis. The sequence is that of UDP-glucuronic acid decarboxylase 3 (UXS3) from Arabidopsis thaliana (Mouse-ear cress).